The primary structure comprises 854 residues: DNA mismatch repair protein MutS (854 aa).

615–622 (GPNMGGKS) is an ATP binding site.

The protein belongs to the DNA mismatch repair MutS family.

In terms of biological role, this protein is involved in the repair of mismatches in DNA. It is possible that it carries out the mismatch recognition step. This protein has a weak ATPase activity. The protein is DNA mismatch repair protein MutS of Aliivibrio fischeri (strain MJ11) (Vibrio fischeri).